Reading from the N-terminus, the 381-residue chain is L-lactate dehydrogenase (381 aa).

The 380-residue stretch at 1 to 380 (MIISASTDYR…TRDSLVRELG (380 aa)) folds into the FMN hydroxy acid dehydrogenase domain. A substrate-binding site is contributed by Y24. Residues S106 and Q127 each coordinate FMN. Substrate is bound at residue Y129. T155 serves as a coordination point for FMN. R164 contacts substrate. K251 serves as a coordination point for FMN. H275 serves as the catalytic Proton acceptor. R278 contributes to the substrate binding site. Residue 306-330 (DSGIRSGLDVVRMIALGADTVLIGR) participates in FMN binding.

Belongs to the FMN-dependent alpha-hydroxy acid dehydrogenase family. As to quaternary structure, homotetramer. The cofactor is FMN.

It is found in the cell inner membrane. The catalysed reaction is (S)-lactate + A = pyruvate + AH2. Catalyzes the conversion of L-lactate to pyruvate. Is coupled to the respiratory chain. The protein is L-lactate dehydrogenase of Pseudomonas entomophila (strain L48).